We begin with the raw amino-acid sequence, 202 residues long: uncharacterized protein (202 aa).

An Isoglutamyl lysine isopeptide (Lys-Gln) (interchain with Q-Cter in protein Pup) cross-link involves residue lysine 136.

This is an uncharacterized protein from Mycobacterium tuberculosis (strain ATCC 25618 / H37Rv).